The chain runs to 398 residues: 2,3-bisphosphoglycerate-independent phosphoglycerate mutase (398 aa).

The protein belongs to the BPG-independent phosphoglycerate mutase family. A-PGAM subfamily.

The catalysed reaction is (2R)-2-phosphoglycerate = (2R)-3-phosphoglycerate. It functions in the pathway carbohydrate degradation; glycolysis; pyruvate from D-glyceraldehyde 3-phosphate: step 3/5. In terms of biological role, catalyzes the interconversion of 2-phosphoglycerate and 3-phosphoglycerate. The sequence is that of 2,3-bisphosphoglycerate-independent phosphoglycerate mutase from Methanosarcina barkeri (strain Fusaro / DSM 804).